Reading from the N-terminus, the 128-residue chain is Large ribosomal subunit protein bL12 (128 aa).

The protein belongs to the bacterial ribosomal protein bL12 family. In terms of assembly, homodimer. Part of the ribosomal stalk of the 50S ribosomal subunit. Forms a multimeric L10(L12)X complex, where L10 forms an elongated spine to which 2 to 4 L12 dimers bind in a sequential fashion. Binds GTP-bound translation factors.

In terms of biological role, forms part of the ribosomal stalk which helps the ribosome interact with GTP-bound translation factors. Is thus essential for accurate translation. The chain is Large ribosomal subunit protein bL12 from Sorangium cellulosum (strain So ce56) (Polyangium cellulosum (strain So ce56)).